The chain runs to 155 residues: SsrA-binding protein (155 aa).

This sequence belongs to the SmpB family.

The protein resides in the cytoplasm. Functionally, required for rescue of stalled ribosomes mediated by trans-translation. Binds to transfer-messenger RNA (tmRNA), required for stable association of tmRNA with ribosomes. tmRNA and SmpB together mimic tRNA shape, replacing the anticodon stem-loop with SmpB. tmRNA is encoded by the ssrA gene; the 2 termini fold to resemble tRNA(Ala) and it encodes a 'tag peptide', a short internal open reading frame. During trans-translation Ala-aminoacylated tmRNA acts like a tRNA, entering the A-site of stalled ribosomes, displacing the stalled mRNA. The ribosome then switches to translate the ORF on the tmRNA; the nascent peptide is terminated with the 'tag peptide' encoded by the tmRNA and targeted for degradation. The ribosome is freed to recommence translation, which seems to be the essential function of trans-translation. This Streptococcus uberis (strain ATCC BAA-854 / 0140J) protein is SsrA-binding protein.